A 544-amino-acid polypeptide reads, in one-letter code: Fructose dehydrogenase large subunit (544 aa).

14 to 30 (GAGICGSLLAHKLVRNG) is a binding site for FAD. Catalysis depends on His478, which acts as the Proton acceptor.

Belongs to the GMC oxidoreductase family. As to quaternary structure, heterotrimer composed of FdhL, FdhS and FdhC. The cofactor is FAD.

The protein localises to the cell membrane. The catalysed reaction is keto-D-fructose + a ubiquinone = 5-dehydro-D-fructose + a ubiquinol. Catalytic subunit of fructose dehydrogenase, an enzyme that catalyzes the oxidation of D-fructose to produce 5-keto-D-fructose. The chain is Fructose dehydrogenase large subunit (fdhL) from Gluconobacter japonicus.